We begin with the raw amino-acid sequence, 241 residues long: Probable septum site-determining protein MinC (241 aa).

Positions 109-135 are disordered; sequence PSGARERKVDPSSKTPAKPAEPTYRPT.

The protein belongs to the MinC family. In terms of assembly, interacts with MinD and FtsZ.

Cell division inhibitor that blocks the formation of polar Z ring septums. Rapidly oscillates between the poles of the cell to destabilize FtsZ filaments that have formed before they mature into polar Z rings. Prevents FtsZ polymerization. The sequence is that of Probable septum site-determining protein MinC from Stutzerimonas stutzeri (strain A1501) (Pseudomonas stutzeri).